Reading from the N-terminus, the 341-residue chain is Phosphate acyltransferase (341 aa).

This sequence belongs to the PlsX family. As to quaternary structure, homodimer. Probably interacts with PlsY.

The protein resides in the cytoplasm. It carries out the reaction a fatty acyl-[ACP] + phosphate = an acyl phosphate + holo-[ACP]. It functions in the pathway lipid metabolism; phospholipid metabolism. In terms of biological role, catalyzes the reversible formation of acyl-phosphate (acyl-PO(4)) from acyl-[acyl-carrier-protein] (acyl-ACP). This enzyme utilizes acyl-ACP as fatty acyl donor, but not acyl-CoA. The sequence is that of Phosphate acyltransferase from Vibrio campbellii (strain ATCC BAA-1116).